A 77-amino-acid polypeptide reads, in one-letter code: Acyl carrier protein (77 aa).

Residues 1–76 (MADFEKIKSI…DVIKFIDKLK (76 aa)) form the Carrier domain. Serine 36 bears the O-(pantetheine 4'-phosphoryl)serine mark.

This sequence belongs to the acyl carrier protein (ACP) family. 4'-phosphopantetheine is transferred from CoA to a specific serine of apo-ACP by AcpS. This modification is essential for activity because fatty acids are bound in thioester linkage to the sulfhydryl of the prosthetic group.

It is found in the cytoplasm. It participates in lipid metabolism; fatty acid biosynthesis. In terms of biological role, carrier of the growing fatty acid chain in fatty acid biosynthesis. This Leptospira biflexa serovar Patoc (strain Patoc 1 / Ames) protein is Acyl carrier protein.